A 757-amino-acid chain; its full sequence is 5-methyltetrahydropteroyltriglutamate--homocysteine methyltransferase (757 aa).

5-methyltetrahydropteroyltri-L-glutamate is bound by residues 16–19 and Lys-112; that span reads RELK. Residues 432–434 and Glu-485 each bind L-homocysteine; that span reads IGS. L-methionine-binding positions include 432–434 and Glu-485; that span reads IGS. Residues 516–517 and Trp-562 contribute to the 5-methyltetrahydropteroyltri-L-glutamate site; that span reads RC. Residue Asp-600 coordinates L-homocysteine. Asp-600 contacts L-methionine. Glu-606 provides a ligand contact to 5-methyltetrahydropteroyltri-L-glutamate. Residues His-642, Cys-644, and Glu-666 each contribute to the Zn(2+) site. Residue His-695 is the Proton donor of the active site. Cys-727 contacts Zn(2+).

This sequence belongs to the vitamin-B12 independent methionine synthase family. Requires Zn(2+) as cofactor.

It catalyses the reaction 5-methyltetrahydropteroyltri-L-glutamate + L-homocysteine = tetrahydropteroyltri-L-glutamate + L-methionine. It functions in the pathway amino-acid biosynthesis; L-methionine biosynthesis via de novo pathway; L-methionine from L-homocysteine (MetE route): step 1/1. In terms of biological role, catalyzes the transfer of a methyl group from 5-methyltetrahydrofolate to homocysteine resulting in methionine formation. The sequence is that of 5-methyltetrahydropteroyltriglutamate--homocysteine methyltransferase from Actinobacillus pleuropneumoniae serotype 5b (strain L20).